A 301-amino-acid polypeptide reads, in one-letter code: Acetylglutamate kinase (301 aa).

Substrate is bound by residues 72 to 73 (GG), arginine 94, and asparagine 199.

Belongs to the acetylglutamate kinase family. ArgB subfamily.

The protein localises to the cytoplasm. It catalyses the reaction N-acetyl-L-glutamate + ATP = N-acetyl-L-glutamyl 5-phosphate + ADP. Its pathway is amino-acid biosynthesis; L-arginine biosynthesis; N(2)-acetyl-L-ornithine from L-glutamate: step 2/4. In terms of biological role, catalyzes the ATP-dependent phosphorylation of N-acetyl-L-glutamate. In Bartonella bacilliformis (strain ATCC 35685 / KC583 / Herrer 020/F12,63), this protein is Acetylglutamate kinase.